We begin with the raw amino-acid sequence, 137 residues long: uncharacterized protein (137 aa).

Residues M1–G15 form the signal peptide. The N-palmitoyl cysteine moiety is linked to residue C16. C16 carries the S-diacylglycerol cysteine lipid modification.

The protein localises to the cell membrane. This is an uncharacterized protein from Escherichia coli (strain K12).